The primary structure comprises 239 residues: Beta-glucanase (239 aa).

The N-terminal stretch at 1 to 25 (MKRVLLILVTGLFMSLCGITSSVSA) is a signal peptide. The region spanning 26-239 (QTGGSFFEPF…HYDWMRYRKK (214 aa)) is the GH16 domain. Cysteines 57 and 86 form a disulfide. The active-site Nucleophile is the Glu-134.

The protein belongs to the glycosyl hydrolase 16 family.

The catalysed reaction is Hydrolysis of (1-&gt;4)-beta-D-glucosidic linkages in beta-D-glucans containing (1-&gt;3)- and (1-&gt;4)-bonds.. The chain is Beta-glucanase (bglA) from Bacillus amyloliquefaciens (Bacillus velezensis).